The following is a 383-amino-acid chain: Acyl-CoA dehydrogenase, short-chain specific (383 aa).

Glu-367 acts as the Proton acceptor in catalysis.

This sequence belongs to the acyl-CoA dehydrogenase family. As to quaternary structure, homotetramer. It depends on FAD as a cofactor.

It catalyses the reaction butanoyl-CoA + oxidized [electron-transfer flavoprotein] + H(+) = (2E)-butenoyl-CoA + reduced [electron-transfer flavoprotein]. The catalysed reaction is a short-chain 2,3-saturated fatty acyl-CoA + oxidized [electron-transfer flavoprotein] + H(+) = a short-chain (2E)-enoyl-CoA + reduced [electron-transfer flavoprotein]. Has an optimum specificity for 4-carbon length fatty acyl-CoAs. The protein is Acyl-CoA dehydrogenase, short-chain specific of Megasphaera elsdenii.